Here is a 206-residue protein sequence, read N- to C-terminus: Pyrrolidone-carboxylate peptidase (206 aa).

Residues Glu-78, Cys-141, and His-165 contribute to the active site.

This sequence belongs to the peptidase C15 family. As to quaternary structure, homotetramer.

Its subcellular location is the cytoplasm. It catalyses the reaction Release of an N-terminal pyroglutamyl group from a polypeptide, the second amino acid generally not being Pro.. Functionally, removes 5-oxoproline from various penultimate amino acid residues except L-proline. This chain is Pyrrolidone-carboxylate peptidase, found in Thermococcus kodakarensis (strain ATCC BAA-918 / JCM 12380 / KOD1) (Pyrococcus kodakaraensis (strain KOD1)).